Reading from the N-terminus, the 348-residue chain is Heat-inducible transcription repressor HrcA (348 aa).

The protein belongs to the HrcA family.

Functionally, negative regulator of class I heat shock genes (grpE-dnaK-dnaJ and groELS operons). Prevents heat-shock induction of these operons. The chain is Heat-inducible transcription repressor HrcA from Ruminiclostridium cellulolyticum (strain ATCC 35319 / DSM 5812 / JCM 6584 / H10) (Clostridium cellulolyticum).